The chain runs to 445 residues: MSMTPREIVHELNRHIIGQDDAKRAVAIALRNRWRRMQLPEELRVEVTPKNILMIGPTGVGKTEIARRLAKLANAPFIKVEATKFTEVGYVGRDVESIIRDLADAAIKLLREQEIVKVRHRAEDAAEDRILDALLPPARVGFNEDPAQSNDSNTRQLFRKRLREGQLDDKEIEIEINEAVGVDISAPPGMEEMTNQLQSLFANMGKGKTKSRKLKVKEALKLVREEEAGRLVNDEELKVKALEAVEQHGIVFIDEIDKVAKRGNSGGVDVSREGVQRDLLPLIEGCTVNTKLGMVKTDHILFIASGAFHLSKPSDLVPELQGRLPIRVELKALSPQDFERILTEPHASLTEQYRELLKTEGLKIEFKPDGIKRLAEIAWQVNEKTENIGARRLHTLLERLLEEVSFSAGDLAISPDAAPIEIDADYVNSHLGDLAENEDLSRYIL.

ATP is bound by residues Ile-17, Gly-59 to Glu-64, Asp-254, Glu-319, and Arg-391.

Belongs to the ClpX chaperone family. HslU subfamily. A double ring-shaped homohexamer of HslV is capped on each side by a ring-shaped HslU homohexamer. The assembly of the HslU/HslV complex is dependent on binding of ATP.

It is found in the cytoplasm. ATPase subunit of a proteasome-like degradation complex; this subunit has chaperone activity. The binding of ATP and its subsequent hydrolysis by HslU are essential for unfolding of protein substrates subsequently hydrolyzed by HslV. HslU recognizes the N-terminal part of its protein substrates and unfolds these before they are guided to HslV for hydrolysis. This Pseudomonas syringae pv. tomato (strain ATCC BAA-871 / DC3000) protein is ATP-dependent protease ATPase subunit HslU.